We begin with the raw amino-acid sequence, 348 residues long: D-erythrose-4-phosphate dehydrogenase (348 aa).

Residues 12–13 (RI) and Arg-81 each bind NAD(+). Substrate contacts are provided by residues 154-156 (SCT), Arg-200, 213-214 (TK), and Arg-236. Cys-155 (nucleophile) is an active-site residue. Asn-318 contributes to the NAD(+) binding site.

Belongs to the glyceraldehyde-3-phosphate dehydrogenase family. Epd subfamily. In terms of assembly, homotetramer.

It is found in the cytoplasm. The catalysed reaction is D-erythrose 4-phosphate + NAD(+) + H2O = 4-phospho-D-erythronate + NADH + 2 H(+). Its pathway is cofactor biosynthesis; pyridoxine 5'-phosphate biosynthesis; pyridoxine 5'-phosphate from D-erythrose 4-phosphate: step 1/5. In terms of biological role, catalyzes the NAD-dependent conversion of D-erythrose 4-phosphate to 4-phosphoerythronate. This Salmonella dublin (strain CT_02021853) protein is D-erythrose-4-phosphate dehydrogenase.